The chain runs to 576 residues: Putative pentatricopeptide repeat-containing protein At5g47460 (576 aa).

PPR repeat units follow at residues 20-53, 54-88, 89-119, 120-154, 155-189, 191-225, 226-252, 253-287, 288-318, 319-353, 354-384, 385-419, 421-452, and 458-488; these read SSNSWSTIVPALARFGSIGVLRAAVELINDGEKP, DASPLVHLLRVSGNYGYVSLCRQLHGYVTKHGFVS, NTRLSNSLMRFYKTSDSLEDAHKVFDEMPDP, DVISWNSLVSGYVQSGRFQEGICLFLELHRSDVFP, NEFSFTAALAACARLHLSPLGACIHSKLVKLGLEK, NVVVGNCLIDMYGKCGFMDDAVLVFQHMEEKDTVS, WNAIVASCSRNGKLELGLWFFHQMPNP, DTVTYNELIDAFVKSGDFNNAFQVLSDMPNPNSSS, WNTILTGYVNSEKSGEATEFFTKMHSSGVRF, DEYSLSIVLAAVAALAVVPWGSLIHACAHKLGLDS, RVVVASALIDMYSKCGMLKHAELMFWTMPRK, NLIVWNEMISGYARNGDSIEAIKLFNQLKQERFLK, DRFTFLNLLAVCSHCEVPMEVMLGYFEMMINE, and SVEHCCSLIRAMGQRGEVWQAKQVIQEFGFG. Residues 493–570 form a type E motif region; that stretch reads AWRALLGACS…EVGSSWIDSR (78 aa).

Belongs to the PPR family. PCMP-E subfamily.

The sequence is that of Putative pentatricopeptide repeat-containing protein At5g47460 (PCMP-E103) from Arabidopsis thaliana (Mouse-ear cress).